A 495-amino-acid chain; its full sequence is uncharacterized protein (495 aa).

An N-terminal signal peptide occupies residues 1 to 17 (MRTLSLLILFLSTFLFA).

This is an uncharacterized protein from Aquifex aeolicus (strain VF5).